A 220-amino-acid polypeptide reads, in one-letter code: MNVQIEESWKTHLQPEFEKDYFRTLTEFVKSEYSQYQIFPPGKLIFNAFNLCPFDKVKVVIIGQDPYHGPGQAHGLCFSVNDGVPFPPSLVNIFKEIKADIGTDAPTTGNLTRWAEQGVLLLNATLTVRAHQAGSHQNRGWEAFTDAAIRALAEEREHLVFILWGAYAQRKGAFIDRNKHLVLSSAHPSPLSAYNGFFGNKHFSRANDYLKANGETEIIW.

The active-site Proton acceptor is the Asp65.

Belongs to the uracil-DNA glycosylase (UDG) superfamily. UNG family.

Its subcellular location is the cytoplasm. It catalyses the reaction Hydrolyzes single-stranded DNA or mismatched double-stranded DNA and polynucleotides, releasing free uracil.. Functionally, excises uracil residues from the DNA which can arise as a result of misincorporation of dUMP residues by DNA polymerase or due to deamination of cytosine. The polypeptide is Uracil-DNA glycosylase (Bacteroides thetaiotaomicron (strain ATCC 29148 / DSM 2079 / JCM 5827 / CCUG 10774 / NCTC 10582 / VPI-5482 / E50)).